We begin with the raw amino-acid sequence, 528 residues long: T-complex protein 1 subunit delta (528 aa).

The protein belongs to the TCP-1 chaperonin family. Heterooligomeric complex of about 850 to 900 kDa that forms two stacked rings, 12 to 16 nm in diameter.

It localises to the cytoplasm. Its function is as follows. Molecular chaperone; assists the folding of proteins upon ATP hydrolysis. Known to play a role, in vitro, in the folding of actin and tubulin. In yeast may play a role in mitotic spindle formation. The chain is T-complex protein 1 subunit delta (CCT4) from Saccharomyces cerevisiae (strain ATCC 204508 / S288c) (Baker's yeast).